A 194-amino-acid polypeptide reads, in one-letter code: Peptidyl-tRNA hydrolase (194 aa).

Tyr-19 is a binding site for tRNA. The Proton acceptor role is filled by His-24. 3 residues coordinate tRNA: Phe-69, Asn-71, and Asn-117.

This sequence belongs to the PTH family. In terms of assembly, monomer.

The protein resides in the cytoplasm. The catalysed reaction is an N-acyl-L-alpha-aminoacyl-tRNA + H2O = an N-acyl-L-amino acid + a tRNA + H(+). Its function is as follows. Hydrolyzes ribosome-free peptidyl-tRNAs (with 1 or more amino acids incorporated), which drop off the ribosome during protein synthesis, or as a result of ribosome stalling. In terms of biological role, catalyzes the release of premature peptidyl moieties from peptidyl-tRNA molecules trapped in stalled 50S ribosomal subunits, and thus maintains levels of free tRNAs and 50S ribosomes. This Neorickettsia sennetsu (strain ATCC VR-367 / Miyayama) (Ehrlichia sennetsu) protein is Peptidyl-tRNA hydrolase.